The following is a 78-amino-acid chain: Small ribosomal subunit protein bS18 (78 aa).

It belongs to the bacterial ribosomal protein bS18 family. In terms of assembly, part of the 30S ribosomal subunit. Forms a tight heterodimer with protein bS6.

In terms of biological role, binds as a heterodimer with protein bS6 to the central domain of the 16S rRNA, where it helps stabilize the platform of the 30S subunit. The polypeptide is Small ribosomal subunit protein bS18 (Frankia casuarinae (strain DSM 45818 / CECT 9043 / HFP020203 / CcI3)).